Reading from the N-terminus, the 284-residue chain is Bifunctional protein FolD (284 aa).

NADP(+)-binding positions include 164 to 166 and I230; that span reads GTS.

Belongs to the tetrahydrofolate dehydrogenase/cyclohydrolase family. In terms of assembly, homodimer.

It catalyses the reaction (6R)-5,10-methylene-5,6,7,8-tetrahydrofolate + NADP(+) = (6R)-5,10-methenyltetrahydrofolate + NADPH. It carries out the reaction (6R)-5,10-methenyltetrahydrofolate + H2O = (6R)-10-formyltetrahydrofolate + H(+). It participates in one-carbon metabolism; tetrahydrofolate interconversion. In terms of biological role, catalyzes the oxidation of 5,10-methylenetetrahydrofolate to 5,10-methenyltetrahydrofolate and then the hydrolysis of 5,10-methenyltetrahydrofolate to 10-formyltetrahydrofolate. This is Bifunctional protein FolD from Mycoplasma capricolum subsp. capricolum (strain California kid / ATCC 27343 / NCTC 10154).